We begin with the raw amino-acid sequence, 355 residues long: Sulfate/thiosulfate import ATP-binding protein CysA (355 aa).

An ABC transporter domain is found at 3 to 233 (IIINNVSKQF…PASPFVMGFI (231 aa)). 35 to 42 (GPSGSGKS) contacts ATP.

This sequence belongs to the ABC transporter superfamily. Sulfate/tungstate importer (TC 3.A.1.6) family. The complex is composed of two ATP-binding proteins (CysA), two transmembrane proteins (CysT and CysW) and a solute-binding protein (CysP).

The protein localises to the cell inner membrane. It catalyses the reaction sulfate(out) + ATP + H2O = sulfate(in) + ADP + phosphate + H(+). It carries out the reaction thiosulfate(out) + ATP + H2O = thiosulfate(in) + ADP + phosphate + H(+). In terms of biological role, part of the ABC transporter complex CysAWTP involved in sulfate/thiosulfate import. Responsible for energy coupling to the transport system. This Synechocystis sp. (strain ATCC 27184 / PCC 6803 / Kazusa) protein is Sulfate/thiosulfate import ATP-binding protein CysA.